The following is a 931-amino-acid chain: Isoleucine--tRNA ligase (931 aa).

The 'HIGH' region signature appears at 58–68 (PYANGHLHCGH). L-isoleucyl-5'-AMP is bound at residue glutamate 559. Residues 600 to 604 (KLSKS) carry the 'KMSKS' region motif. ATP is bound at residue lysine 603. Residues cysteine 894, cysteine 897, cysteine 914, and cysteine 917 each coordinate Zn(2+).

The protein belongs to the class-I aminoacyl-tRNA synthetase family. IleS type 1 subfamily. In terms of assembly, monomer. Zn(2+) is required as a cofactor.

Its subcellular location is the cytoplasm. The catalysed reaction is tRNA(Ile) + L-isoleucine + ATP = L-isoleucyl-tRNA(Ile) + AMP + diphosphate. Its function is as follows. Catalyzes the attachment of isoleucine to tRNA(Ile). As IleRS can inadvertently accommodate and process structurally similar amino acids such as valine, to avoid such errors it has two additional distinct tRNA(Ile)-dependent editing activities. One activity is designated as 'pretransfer' editing and involves the hydrolysis of activated Val-AMP. The other activity is designated 'posttransfer' editing and involves deacylation of mischarged Val-tRNA(Ile). The chain is Isoleucine--tRNA ligase from Legionella pneumophila (strain Corby).